Reading from the N-terminus, the 475-residue chain is Enolase (475 aa).

Glutamine 179 contacts (2R)-2-phosphoglycerate. The active-site Proton donor is glutamate 221. The Mg(2+) site is built by aspartate 258, glutamate 312, and aspartate 339. (2R)-2-phosphoglycerate is bound by residues lysine 364, arginine 393, serine 394, and lysine 415. Catalysis depends on lysine 364, which acts as the Proton acceptor. The interval 454–475 (STPAATPKKSPAKKTTKAKSKK) is disordered. Over residues 463–475 (SPAKKTTKAKSKK) the composition is skewed to basic residues.

It belongs to the enolase family. Mg(2+) serves as cofactor.

It localises to the cell membrane. The protein resides in the cytoplasm. Its subcellular location is the secreted. The protein localises to the cell surface. The enzyme catalyses (2R)-2-phosphoglycerate = phosphoenolpyruvate + H2O. It participates in carbohydrate degradation; glycolysis; pyruvate from D-glyceraldehyde 3-phosphate: step 4/5. In terms of biological role, catalyzes the reversible conversion of 2-phosphoglycerate (2-PG) into phosphoenolpyruvate (PEP). It is essential for the degradation of carbohydrates via glycolysis. Its function is as follows. 'Moonlights' as a plasminogen receptor. Binds host (chicken) plasminogen; enolase antiserum inhibits M.gallisepticum adherence to chicken embryo fibroblasts. This chain is Enolase, found in Mycoplasmoides gallisepticum (strain R(low / passage 15 / clone 2)) (Mycoplasma gallisepticum).